Consider the following 115-residue polypeptide: Type 3 secretion system chaperone PscG (115 aa).

It belongs to the YscG family. In terms of assembly, forms a stable heterotrimeric complex with PscE and PscF/SctF in the cytoplasm. Co-stabilized by PscE.

It localises to the cytoplasm. Its function is as follows. Chaperone of the type III secretion system (T3SS), also called injectisome, which is used to inject bacterial effector proteins into eukaryotic host cells, facilitating the establishment and dissemination of infection. Along with PscE, prevents premature polymerization of the PscF/SctF needle protein within the cytoplasm. Required for type III secretion needle assembly. Also required for cytotoxicity by influencing PscF/SctF levels. This is Type 3 secretion system chaperone PscG (pscG) from Pseudomonas aeruginosa (strain ATCC 15692 / DSM 22644 / CIP 104116 / JCM 14847 / LMG 12228 / 1C / PRS 101 / PAO1).